The chain runs to 223 residues: Deoxyribose-phosphate aldolase (223 aa).

Residue aspartate 89 is the Proton donor/acceptor of the active site. The active-site Schiff-base intermediate with acetaldehyde is the lysine 154. Lysine 183 acts as the Proton donor/acceptor in catalysis.

It belongs to the DeoC/FbaB aldolase family. DeoC type 1 subfamily.

It is found in the cytoplasm. The catalysed reaction is 2-deoxy-D-ribose 5-phosphate = D-glyceraldehyde 3-phosphate + acetaldehyde. The protein operates within carbohydrate degradation; 2-deoxy-D-ribose 1-phosphate degradation; D-glyceraldehyde 3-phosphate and acetaldehyde from 2-deoxy-alpha-D-ribose 1-phosphate: step 2/2. In terms of biological role, catalyzes a reversible aldol reaction between acetaldehyde and D-glyceraldehyde 3-phosphate to generate 2-deoxy-D-ribose 5-phosphate. The polypeptide is Deoxyribose-phosphate aldolase (Thermoanaerobacter pseudethanolicus (strain ATCC 33223 / 39E) (Clostridium thermohydrosulfuricum)).